The chain runs to 378 residues: Alpha-(1,3)-fucosyltransferase fut-5 (378 aa).

Residues 1–7 (MKHNTLR) lie on the Cytoplasmic side of the membrane. The chain crosses the membrane as a helical; Signal-anchor for type II membrane protein span at residues 8–28 (AVFQFSFFIGICTFIMIAGYS). Topologically, residues 29–378 (YQINYNQRMG…CDNSFATRFL (350 aa)) are lumenal. 6 N-linked (GlcNAc...) asparagine glycosylation sites follow: Asn44, Asn88, Asn105, Asn143, Asn171, and Asn307.

The protein belongs to the glycosyltransferase 10 family. Ca(2+) serves as cofactor. N-glycosylated.

Its subcellular location is the golgi apparatus. It localises to the golgi stack membrane. It carries out the reaction a beta-D-galactosyl-(1-&gt;3)-N-acetyl-beta-D-glucosaminyl derivative + GDP-beta-L-fucose = a beta-D-galactosyl-(1-&gt;3)-[alpha-L-fucosyl-(1-&gt;4)]-N-acetyl-beta-D-glucosaminyl derivative + GDP + H(+). It functions in the pathway protein modification; protein glycosylation. Inhibited by Cu(2+) and Ni(2+), and to a lesser extent by EDTA, Mn(2+) and Mg(2+). Functionally, catalyzes the addition of fucose in alpha 1-3 linkage to GalNAc-beta-1-&gt;4-GlcNAc-beta-1-&gt;3-Gal-beta-1-&gt;4-Glc (LDNT)acceptor. Unlike fut-1, does not add fucose to Man-alpha-1-&gt;3-(Man-alpha-1-&gt;6)-Man-beta-1-&gt;4-GlcNAc-beta-1-&gt;4-GlcNAc-beta-1-Asn (M3), Man-alpha-1-&gt;3-(Man-alpha-1-&gt;6)-Man-beta-1-&gt;4-GlcNAc-beta-1-&gt;4-(Fuc-alpha-1-&gt;6)-GlcNAc-beta-1-Asn (M3F6) or GlcNAc-beta-1-&gt;2-Man-alpha-1-&gt;3-(GlcNAc-beta-1-&gt;2-Man-alpha-1-&gt;6)-Man-beta-1-4-GlcNAc-beta-1-&gt;4-(Fuc-alpha-1-&gt;6)-GlcNAc-beta-1-Asn (GnM3F6) acceptors. The polypeptide is Alpha-(1,3)-fucosyltransferase fut-5 (Caenorhabditis elegans).